Here is a 115-residue protein sequence, read N- to C-terminus: Large ribosomal subunit protein uL18 (115 aa).

Residues M1–P29 form a disordered region. A compositionally biased stretch (basic residues) spans L10–G20.

Belongs to the universal ribosomal protein uL18 family. Part of the 50S ribosomal subunit; part of the 5S rRNA/L5/L18/L25 subcomplex. Contacts the 5S and 23S rRNAs.

Functionally, this is one of the proteins that bind and probably mediate the attachment of the 5S RNA into the large ribosomal subunit, where it forms part of the central protuberance. This Lactococcus lactis subsp. lactis (strain IL1403) (Streptococcus lactis) protein is Large ribosomal subunit protein uL18.